Here is a 222-residue protein sequence, read N- to C-terminus: MEIPPTNYPASRAALVAQNYINYQQGTPHRVFEVQKVKQASMEDIPGRGHKYHLKFAVEEIIQKQVKVNCTAEVLYPSTGQETAPEVNFTFEGETGKNPDEEDNTFYQRLKSMKEPLEAQNIPDNFGNVSPEMTLVLHLAWVACGYIIWQNSTEDTWYKMVKIQTVKQVQRNDDFIELDYTILLHNIASQEIIPWQMQVLWHPQYGTKVKHNSRLPKEVQLE.

The 97-residue stretch at 1–97 (MEIPPTNYPA…NFTFEGETGK (97 aa)) folds into the Cystatin LXN-type 1 domain. An N6-acetyllysine modification is found at Lys55. The tract at residues 98–117 (NPDEEDNTFYQRLKSMKEPL) is alpha-helical linker. The region spanning 118 to 222 (EAQNIPDNFG…SRLPKEVQLE (105 aa)) is the Cystatin LXN-type 2 domain.

Belongs to the protease inhibitor I47 (latexin) family. As to expression, highly expressed in heart, prostate, ovary, kidney, pancreas, and colon, moderate or low in other tissues including brain.

The protein localises to the cytoplasm. In terms of biological role, hardly reversible, non-competitive, and potent inhibitor of CPA1, CPA2 and CPA4. May play a role in inflammation. This chain is Latexin (LXN), found in Homo sapiens (Human).